Reading from the N-terminus, the 272-residue chain is uncharacterized protein (272 aa).

Residues cysteine 101–glutamate 130 form a disordered region. Over residues proline 110–leucine 125 the composition is skewed to low complexity. Serine 142 is modified (phosphoserine).

This is an uncharacterized protein from Arabidopsis thaliana (Mouse-ear cress).